We begin with the raw amino-acid sequence, 148 residues long: RxLR effector protein SFI7 (148 aa).

Positions 1-22 (MRAYFVLLVAATAILTYGGATA) are cleaved as a signal peptide. N-linked (GlcNAc...) asparagine glycosylation is present at Asn-32. The RxLR-dEER motif lies at 44–58 (RSLRVAPSGGNGEER).

It belongs to the RxLR effector family.

It is found in the secreted. The protein resides in the host cytoplasm. Its subcellular location is the host cell membrane. Functionally, effector that suppresses flg22-induced post-translational MAP kinase activation in tomato but not in Arabidopsis. The perception of highly conserved pathogen- or microbe-associated molecular patterns (PAMPs/MAMPs), such as flg22, triggers converging signaling pathways recruiting MAP kinase cascades and inducing transcriptional re-programming, yielding a generic antimicrobial response. Also partially attenuates INF1-triggered cell death. This Phytophthora infestans (strain T30-4) (Potato late blight agent) protein is RxLR effector protein SFI7.